The sequence spans 171 residues: Iron-sulfur cluster assembly protein 1 (171 aa).

Residues 1–55 (MLRAGGRRLLAPGLRRVLGGGAAAPVAVGGAKAYHERVVDHYENPRNVGSFENDD) constitute a mitochondrion transit peptide.

The protein belongs to the NifU family. As to quaternary structure, component of the core Fe-S cluster (ISC) assembly machinery. It depends on [2Fe-2S] cluster as a cofactor.

It is found in the mitochondrion matrix. Its pathway is cofactor biosynthesis; iron-sulfur cluster biosynthesis. In terms of biological role, scaffold protein for the de novo synthesis of iron-sulfur (Fe-S) clusters within mitochondria, which is required for maturation of both mitochondrial and cytoplasmic [2Fe-2S] and [4Fe-4S] proteins. First, a [2Fe-2S] cluster is transiently assembled on the scaffold protein ISCU (ISU1, ISU2 or ISU3). In a second step, the cluster is released from ISCU, transferred to a glutaredoxin, followed by the formation of mitochondrial [2Fe-2S] proteins, the synthesis of [4Fe-4S] clusters and their target-specific insertion into the recipient apoproteins. Cluster assembly on ISCU depends on the function of the cysteine desulfurase complex NFS1-ISD11, which serves as the sulfur donor for cluster synthesis, the iron-binding protein frataxin as the putative iron donor, and the electron transfer chain comprised of ferredoxin reductase and ferredoxin, which receive their electrons from NADH. The protein is Iron-sulfur cluster assembly protein 1 of Oryza sativa subsp. japonica (Rice).